Consider the following 337-residue polypeptide: G-protein coupled receptor 26 (337 aa).

The Extracellular portion of the chain corresponds to Met-1–Gly-10. The helical transmembrane segment at Leu-11–Leu-31 threads the bilayer. Residues His-32 to Asn-47 lie on the Cytoplasmic side of the membrane. The helical transmembrane segment at Leu-48 to Val-68 threads the bilayer. Topologically, residues Ala-69 to Leu-81 are extracellular. A disulfide bridge links Cys-79 with Cys-156. A helical membrane pass occupies residues Ala-82 to Ile-102. The Cytoplasmic segment spans residues Asp-103 to Ala-123. The chain crosses the membrane as a helical span at residues Ala-124–Leu-144. Residues Ser-145–Arg-168 lie on the Extracellular side of the membrane. A helical transmembrane segment spans residues Phe-169–Cys-189. Residues Cys-190–Thr-245 lie on the Cytoplasmic side of the membrane. Residues Phe-246–Phe-266 form a helical membrane-spanning segment. The Extracellular portion of the chain corresponds to Ser-267–Gly-276. The helical transmembrane segment at Val-277–Leu-297 threads the bilayer. The Cytoplasmic segment spans residues Arg-298–Glu-337.

It belongs to the G-protein coupled receptor 1 family. As to expression, highly expressed in the CNS, the highest expression is seen in the amygdala, hippocampus and thalamus. Weak expression is detected in testis. Down-regulated in glioblastoma.

The protein localises to the cell membrane. In terms of biological role, orphan receptor. Displays a significant level of constitutive activity. Its effect is mediated by G(s)-alpha protein that stimulate adenylate cyclase, resulting in an elevation of intracellular cAMP. This chain is G-protein coupled receptor 26 (GPR26), found in Homo sapiens (Human).